A 258-amino-acid chain; its full sequence is Heat-labile enterotoxin A chain (258 aa).

Residues 1–18 form the signal peptide; it reads MKNITFIFFILLASPLYA. 25 to 39 is a binding site for NAD(+); that stretch reads RADSRPPDEIKRSGG. E128 is an active-site residue. C205 and C217 are disulfide-bonded.

The protein belongs to the enterotoxin A family. Heterohexamer of one A chain and of five B chains.

Its function is as follows. The biological activity of the toxin is produced by the A chain, which activates intracellular adenyl cyclase. The sequence is that of Heat-labile enterotoxin A chain (eltA) from Escherichia coli O78:H11 (strain H10407 / ETEC).